The chain runs to 994 residues: Translocase of chloroplast 108, chloroplastic (994 aa).

3 disordered regions span residues 14 to 61 (KEAS…EDEP), 84 to 124 (TTDL…DPSV), and 152 to 287 (AVDG…DETR). 2 stretches are compositionally biased toward polar residues: residues 37–53 (GETT…ANES) and 84–98 (TTDL…TPSN). Over residues 99-121 (AEKESPEATEVRIVEEGKLEKAD) the composition is skewed to basic and acidic residues. The span at 166–197 (NDGDTDANTADEDNENDEDDVDEDEDEDDADM) shows a compositional bias: acidic residues. The segment covering 249–268 (ASDSPGRNTQRPNGALSTQI) has biased composition (polar residues). A compositionally biased stretch (low complexity) spans 269-280 (TSTTDESASSDA). An AIG1-type G domain is found at 360 to 589 (DFACTILVLG…KLQETTAPGR (230 aa)). Residues 369–376 (GKTGVGKS) are G1. 372 to 377 (GVGKSS) serves as a coordination point for GTP. A Mg(2+)-binding site is contributed by serine 376. The interval 395 to 399 (PSTNK) is G2. The G3 stretch occupies residues 416–419 (DTPG). The interval 488–491 (THAS) is G4. GTP-binding positions include histidine 489 and 537–538 (EN). Residues 537 to 539 (ENH) are G5. Disordered regions lie at residues 616-659 (LPDE…EDLT) and 691-716 (EAKK…EAGN). Residues 620–643 (QAGESDESDDDEEEEDSDADDYDE) show a composition bias toward acidic residues. Positions 650–659 (LSKEELEDLT) are enriched in basic and acidic residues. Over residues 705–714 (AEAEEAEDEA) the composition is skewed to acidic residues. Residues 969 to 989 (MVLIGIVPILRSLINCRFGFG) traverse the membrane as a helical segment.

The protein belongs to the TRAFAC class TrmE-Era-EngA-EngB-Septin-like GTPase superfamily. AIG1/Toc34/Toc159-like paraseptin GTPase family. TOC159 subfamily. Part of the TOC core complex. The cofactor is Mg(2+).

The protein localises to the plastid. Its subcellular location is the chloroplast outer membrane. Functionally, GTPase involved in protein precursor import into chloroplasts. Seems to recognize chloroplast-destined precursor proteins and regulate their presentation to the translocation channel through GTP hydrolysis. Probably specialized in the import of nuclear encoded non-photosynthetic preproteins from the cytoplasm to the chloroplast. The protein is Translocase of chloroplast 108, chloroplastic of Physcomitrium patens (Spreading-leaved earth moss).